A 209-amino-acid chain; its full sequence is Glutathione S-transferase 1-1 (209 aa).

Positions 1–81 (MADFYYLPGS…YLVEKYGKTD (81 aa)) constitute a GST N-terminal domain. Residues 51–53 (HTI) and 65–67 (ESR) each bind glutathione. The GST C-terminal domain occupies 87-209 (CPKKRAVINQ…GCLEFKKYFE (123 aa)).

The protein belongs to the GST superfamily. Theta family. Homodimer.

The enzyme catalyses RX + glutathione = an S-substituted glutathione + a halide anion + H(+). In terms of biological role, conjugation of reduced glutathione to a wide number of exogenous and endogenous hydrophobic electrophiles. In Drosophila yakuba (Fruit fly), this protein is Glutathione S-transferase 1-1 (GstD1).